The following is a 438-amino-acid chain: Cytochrome P450 monooxygenase claJ (438 aa).

Cys378 is a heme binding site.

Belongs to the cytochrome P450 family. Heme serves as cofactor.

Its pathway is secondary metabolite biosynthesis. Cytochrome P450 monooxygenase; part of the cla gene cluster that produces clavatol and ortho-quinone methide. The clavatol biosynthesis cluster cla and the terrestric acid cluster tra are both involved in the production of peniphenones and penilactones. The non-reducing PKS claF is responsible for the formation of clavatol from successive condensations of 3 malonyl-CoA units, presumably with a simple acetyl-CoA starter unit, and 2 methylation steps. The esterase claE probably collaborates with claF by catalyzing the hydrolysis of ACP-bound acyl intermediates to free the ACP from stalled intermediates. The clavatol oxidase claD then converts clavatol to hydroxyclavatol. Spontaneous dehydration of hydroxyclavatol leads to the accumulation of the highly active ortho-quinone methide. On the other hand, the PKS-NRPS hybrid traA is involved in the formation of crustosic acid, with the help of traB and traD. The polyketide synthase module (PKS) of traA is responsible for the synthesis of the polyketide backbone via the condensation of an acetyl-CoA starter unit with 3 malonyl-CoA units. The downstream nonribosomal peptide synthetase (NRPS) module then amidates the carboxyl end of the polyketide with L-malic acid. Because traA lacks a designated enoylreductase (ER) domain, the required activity is provided the enoyl reductase traG. Crustosic acid undergoes decarboxylation and isomerization to the terrestric acid, catalyzed by the 2-oxoglutarate-dependent dioxygenase traH. Both acids are further converted to the 2 gamma-butyrolactones (R)-5-methyltetronic acid and (S)-5-carboxylmethyltetronic acid, with involvement of the cytochrome P450 monooxygenase claJ. Spontaneous addition of the methide to these gamma-butyrolactones leads to peniphenone D and penilactone D, which undergo again stereospecific attacking by methide to give penilactones A and B. The chain is Cytochrome P450 monooxygenase claJ from Penicillium crustosum (Blue mold fungus).